The following is a 210-amino-acid chain: Ion-translocating oxidoreductase complex subunit G (210 aa).

Residues 9 to 29 (SLVLALFAIAATALVTITYAL) traverse the membrane as a helical segment. The residue at position 176 (T176) is an FMN phosphoryl threonine.

This sequence belongs to the RnfG family. As to quaternary structure, the complex is composed of six subunits: RnfA, RnfB, RnfC, RnfD, RnfE and RnfG. The cofactor is FMN.

It localises to the cell inner membrane. Functionally, part of a membrane-bound complex that couples electron transfer with translocation of ions across the membrane. This is Ion-translocating oxidoreductase complex subunit G from Aliivibrio fischeri (strain ATCC 700601 / ES114) (Vibrio fischeri).